Consider the following 165-residue polypeptide: PARP-type zinc finger-containing protein C13F5.07c (165 aa).

The PARP-type; degenerate zinc finger occupies 8-100 (YRIEIAPNNR…KVVDAINEGH (93 aa)). Basic and acidic residues predominate over residues 100-114 (HVSESDERESRKLGE). Residues 100 to 165 (HVSESDERES…TDGSEAYEDD (66 aa)) are disordered. Over residues 117–128 (NVNSQKLKTSSP) the composition is skewed to polar residues. Basic residues predominate over residues 131–141 (VVRKNKRHHTT). Positions 149-165 (SDLDAEFTDGSEAYEDD) are enriched in acidic residues.

The protein resides in the cytoplasm. The protein localises to the nucleus. The polypeptide is PARP-type zinc finger-containing protein C13F5.07c (Schizosaccharomyces pombe (strain 972 / ATCC 24843) (Fission yeast)).